The chain runs to 334 residues: CRISPR-associated protein Cas1 3 (334 aa).

Residues E165, H230, and E245 each contribute to the Mn(2+) site.

Belongs to the CRISPR-associated endonuclease Cas1 family. In terms of assembly, homodimer, forms a heterotetramer with a Cas2 homodimer. The cofactor is Mg(2+). Mn(2+) serves as cofactor.

Its function is as follows. CRISPR (clustered regularly interspaced short palindromic repeat), is an adaptive immune system that provides protection against mobile genetic elements (viruses, transposable elements and conjugative plasmids). CRISPR clusters contain spacers, sequences complementary to antecedent mobile elements, and target invading nucleic acids. CRISPR clusters are transcribed and processed into CRISPR RNA (crRNA). Acts as a dsDNA endonuclease. Involved in the integration of spacer DNA into the CRISPR cassette. The chain is CRISPR-associated protein Cas1 3 from Methanobrevibacter ruminantium (strain ATCC 35063 / DSM 1093 / JCM 13430 / OCM 146 / M1) (Methanobacterium ruminantium).